The following is a 274-amino-acid chain: NH(3)-dependent NAD(+) synthetase (274 aa).

Glycine 46 to serine 53 contacts ATP. Aspartate 52 provides a ligand contact to Mg(2+). Residue arginine 140 coordinates deamido-NAD(+). Residue threonine 160 participates in ATP binding. Glutamate 165 is a binding site for Mg(2+). Residues lysine 173 and aspartate 180 each coordinate deamido-NAD(+). ATP is bound by residues lysine 189 and threonine 211. Histidine 260 to lysine 261 contributes to the deamido-NAD(+) binding site.

This sequence belongs to the NAD synthetase family. Homodimer.

The enzyme catalyses deamido-NAD(+) + NH4(+) + ATP = AMP + diphosphate + NAD(+) + H(+). It functions in the pathway cofactor biosynthesis; NAD(+) biosynthesis; NAD(+) from deamido-NAD(+) (ammonia route): step 1/1. Its function is as follows. Catalyzes the ATP-dependent amidation of deamido-NAD to form NAD. Uses ammonia as a nitrogen source. This is NH(3)-dependent NAD(+) synthetase from Streptococcus mutans serotype c (strain ATCC 700610 / UA159).